Consider the following 683-residue polypeptide: Glycine--tRNA ligase beta subunit (683 aa).

This sequence belongs to the class-II aminoacyl-tRNA synthetase family. As to quaternary structure, tetramer of two alpha and two beta subunits.

It localises to the cytoplasm. The catalysed reaction is tRNA(Gly) + glycine + ATP = glycyl-tRNA(Gly) + AMP + diphosphate. The sequence is that of Glycine--tRNA ligase beta subunit from Pseudomonas putida (strain W619).